Reading from the N-terminus, the 192-residue chain is Pyridoxal 5'-phosphate synthase subunit PdxT (192 aa).

Residue 53–55 (GES) coordinates L-glutamine. Cys82 (nucleophile) is an active-site residue. L-glutamine is bound by residues Arg108 and 134–135 (IR). Residues His170 and Glu172 each act as charge relay system in the active site.

It belongs to the glutaminase PdxT/SNO family. In the presence of PdxS, forms a dodecamer of heterodimers. Only shows activity in the heterodimer.

It carries out the reaction aldehydo-D-ribose 5-phosphate + D-glyceraldehyde 3-phosphate + L-glutamine = pyridoxal 5'-phosphate + L-glutamate + phosphate + 3 H2O + H(+). The catalysed reaction is L-glutamine + H2O = L-glutamate + NH4(+). Its pathway is cofactor biosynthesis; pyridoxal 5'-phosphate biosynthesis. Its function is as follows. Catalyzes the hydrolysis of glutamine to glutamate and ammonia as part of the biosynthesis of pyridoxal 5'-phosphate. The resulting ammonia molecule is channeled to the active site of PdxS. This chain is Pyridoxal 5'-phosphate synthase subunit PdxT, found in Methanothermobacter thermautotrophicus (strain ATCC 29096 / DSM 1053 / JCM 10044 / NBRC 100330 / Delta H) (Methanobacterium thermoautotrophicum).